Reading from the N-terminus, the 78-residue chain is Small ribosomal subunit protein bS16c (78 aa).

It belongs to the bacterial ribosomal protein bS16 family.

It localises to the plastid. The protein localises to the chloroplast. The chain is Small ribosomal subunit protein bS16c from Chara vulgaris (Common stonewort).